A 260-amino-acid polypeptide reads, in one-letter code: Hydroxyethylthiazole kinase 1 (260 aa).

A substrate-binding site is contributed by methionine 39. ATP-binding residues include arginine 115 and threonine 160. A substrate-binding site is contributed by glycine 187.

The protein belongs to the Thz kinase family. It depends on Mg(2+) as a cofactor.

The enzyme catalyses 5-(2-hydroxyethyl)-4-methylthiazole + ATP = 4-methyl-5-(2-phosphooxyethyl)-thiazole + ADP + H(+). It participates in cofactor biosynthesis; thiamine diphosphate biosynthesis; 4-methyl-5-(2-phosphoethyl)-thiazole from 5-(2-hydroxyethyl)-4-methylthiazole: step 1/1. Functionally, catalyzes the phosphorylation of the hydroxyl group of 4-methyl-5-beta-hydroxyethylthiazole (THZ). The protein is Hydroxyethylthiazole kinase 1 of Streptococcus pneumoniae serotype 2 (strain D39 / NCTC 7466).